The sequence spans 871 residues: Protein translocase subunit SecA (871 aa).

Residues Gln80, 98-102 (GEGKT), and Asp537 each bind ATP.

It belongs to the SecA family. In terms of assembly, monomer and homodimer. Part of the essential Sec protein translocation apparatus which comprises SecA, SecYEG and auxiliary proteins SecDF. Other proteins may also be involved.

The protein resides in the cell inner membrane. Its subcellular location is the cytoplasm. The catalysed reaction is ATP + H2O + cellular proteinSide 1 = ADP + phosphate + cellular proteinSide 2.. Part of the Sec protein translocase complex. Interacts with the SecYEG preprotein conducting channel. Has a central role in coupling the hydrolysis of ATP to the transfer of proteins into and across the cell membrane, serving as an ATP-driven molecular motor driving the stepwise translocation of polypeptide chains across the membrane. This is Protein translocase subunit SecA from Thermotoga sp. (strain RQ2).